Here is a 354-residue protein sequence, read N- to C-terminus: Probable trehalose-phosphate phosphatase E (354 aa).

This sequence belongs to the trehalose phosphatase family. Requires a divalent metal cation as cofactor.

It catalyses the reaction alpha,alpha-trehalose 6-phosphate + H2O = alpha,alpha-trehalose + phosphate. Its pathway is glycan biosynthesis; trehalose biosynthesis. Functionally, removes the phosphate from trehalose 6-phosphate to produce free trehalose. Trehalose accumulation in plant may improve abiotic stress tolerance. In Arabidopsis thaliana (Mouse-ear cress), this protein is Probable trehalose-phosphate phosphatase E (TPPE).